A 698-amino-acid polypeptide reads, in one-letter code: Ubiquitin-like modifier-activating enzyme ATG7 (698 aa).

Positions 11-13 match the FAP motif motif; sequence FAP. A Glycyl lysine isopeptide (Lys-Gly) (interchain with G-Cter in ubiquitin) cross-link involves residue K41. C567 serves as the catalytic Glycyl thioester intermediate. S693 carries the post-translational modification Phosphoserine.

It belongs to the ATG7 family. In terms of assembly, homodimer. Interacts with ATG3; this interaction is essential for the transfer of ATG8-like proteins's thioester from ATG7 to ATG3 and plays a role in the conjugation of ATG12 to ATG5. Interacts with ATG12. Forms intermediate conjugates with GABARAPL1. Forms intermediate conjugates with ATG8-like proteins such as GABARAP, GABARAPL2 or MAP1LC3A. Interacts with EP300 acetyltransferase. Interacts with FOXO1. Acetylated by EP300. In terms of processing, polyubiquitinated on Lys-41 via 'Lys-63'-linked ubiquitin by TRIM32; this modification positiely regulates ATG8 and ATG12 activating enzyme activity leading to initiation of autophagy under metabolic stress. As to expression, widely expressed.

Its subcellular location is the cytoplasm. It localises to the preautophagosomal structure. Functionally, E1-like activating enzyme involved in the 2 ubiquitin-like systems required for cytoplasm to vacuole transport (Cvt) and autophagy. Activates ATG12 for its conjugation with ATG5 as well as the ATG8 family proteins for their conjugation with phosphatidylethanolamine. Both systems are needed for the ATG8 association to Cvt vesicles and autophagosomes membranes. Required for autophagic death induced by caspase-8 inhibition. Facilitates LC3-I lipidation with phosphatidylethanolamine to form LC3-II which is found on autophagosomal membranes. Required for mitophagy which contributes to regulate mitochondrial quantity and quality by eliminating the mitochondria to a basal level to fulfill cellular energy requirements and preventing excess ROS production. Modulates p53/TP53 activity to regulate cell cycle and survival during metabolic stress. Also plays a key role in the maintenance of axonal homeostasis, the prevention of axonal degeneration, the maintenance of hematopoietic stem cells, the formation of Paneth cell granules, as well as in adipose differentiation. Plays a role in regulating the liver clock and glucose metabolism by mediating the autophagic degradation of CRY1 (clock repressor) in a time-dependent manner. In Rattus norvegicus (Rat), this protein is Ubiquitin-like modifier-activating enzyme ATG7.